The following is a 147-amino-acid chain: UPF0735 ACT domain-containing protein RBAM_024960 (147 aa).

Residues 70-145 (TLFFHLEDRS…FIEKVEILGS (76 aa)) form the ACT domain.

This sequence belongs to the UPF0735 family.

In Bacillus velezensis (strain DSM 23117 / BGSC 10A6 / LMG 26770 / FZB42) (Bacillus amyloliquefaciens subsp. plantarum), this protein is UPF0735 ACT domain-containing protein RBAM_024960.